A 640-amino-acid polypeptide reads, in one-letter code: Biosynthetic arginine decarboxylase (640 aa).

Position 109 is an N6-(pyridoxal phosphate)lysine (Lys109). 291–301 serves as a coordination point for substrate; the sequence is LDVGGGLGVDY.

It belongs to the Orn/Lys/Arg decarboxylase class-II family. SpeA subfamily. The cofactor is Mg(2+). Pyridoxal 5'-phosphate is required as a cofactor.

It catalyses the reaction L-arginine + H(+) = agmatine + CO2. Its pathway is amine and polyamine biosynthesis; agmatine biosynthesis; agmatine from L-arginine: step 1/1. Functionally, catalyzes the biosynthesis of agmatine from arginine. This is Biosynthetic arginine decarboxylase from Synechococcus sp. (strain RCC307).